A 339-amino-acid chain; its full sequence is Lipoyl synthase (339 aa).

Residues 13 to 35 (RPKLDAPARPRHPEKAHRPDTAI) form a disordered region. 7 residues coordinate [4Fe-4S] cluster: Cys-68, Cys-73, Cys-79, Cys-94, Cys-98, Cys-101, and Ser-307. One can recognise a Radical SAM core domain in the interval 80–296 (WEKRHATFMI…ETTAYAKGFL (217 aa)).

The protein belongs to the radical SAM superfamily. Lipoyl synthase family. The cofactor is [4Fe-4S] cluster.

The protein resides in the cytoplasm. The enzyme catalyses [[Fe-S] cluster scaffold protein carrying a second [4Fe-4S](2+) cluster] + N(6)-octanoyl-L-lysyl-[protein] + 2 oxidized [2Fe-2S]-[ferredoxin] + 2 S-adenosyl-L-methionine + 4 H(+) = [[Fe-S] cluster scaffold protein] + N(6)-[(R)-dihydrolipoyl]-L-lysyl-[protein] + 4 Fe(3+) + 2 hydrogen sulfide + 2 5'-deoxyadenosine + 2 L-methionine + 2 reduced [2Fe-2S]-[ferredoxin]. It participates in protein modification; protein lipoylation via endogenous pathway; protein N(6)-(lipoyl)lysine from octanoyl-[acyl-carrier-protein]: step 2/2. In terms of biological role, catalyzes the radical-mediated insertion of two sulfur atoms into the C-6 and C-8 positions of the octanoyl moiety bound to the lipoyl domains of lipoate-dependent enzymes, thereby converting the octanoylated domains into lipoylated derivatives. The protein is Lipoyl synthase of Methylorubrum extorquens (strain PA1) (Methylobacterium extorquens).